The following is a 138-amino-acid chain: uncharacterized protein (138 aa).

Phosphoserine is present on serine 110.

The protein localises to the cytoplasm. It localises to the nucleus. This is an uncharacterized protein from Schizosaccharomyces pombe (strain 972 / ATCC 24843) (Fission yeast).